The sequence spans 281 residues: Bifunctional protein FolD (281 aa).

Position 163–165 (163–165 (GRS)) interacts with NADP(+).

It belongs to the tetrahydrofolate dehydrogenase/cyclohydrolase family. As to quaternary structure, homodimer.

It carries out the reaction (6R)-5,10-methylene-5,6,7,8-tetrahydrofolate + NADP(+) = (6R)-5,10-methenyltetrahydrofolate + NADPH. It catalyses the reaction (6R)-5,10-methenyltetrahydrofolate + H2O = (6R)-10-formyltetrahydrofolate + H(+). The protein operates within one-carbon metabolism; tetrahydrofolate interconversion. In terms of biological role, catalyzes the oxidation of 5,10-methylenetetrahydrofolate to 5,10-methenyltetrahydrofolate and then the hydrolysis of 5,10-methenyltetrahydrofolate to 10-formyltetrahydrofolate. The sequence is that of Bifunctional protein FolD from Leuconostoc mesenteroides subsp. mesenteroides (strain ATCC 8293 / DSM 20343 / BCRC 11652 / CCM 1803 / JCM 6124 / NCDO 523 / NBRC 100496 / NCIMB 8023 / NCTC 12954 / NRRL B-1118 / 37Y).